Here is a 1060-residue protein sequence, read N- to C-terminus: Protocadherin-1 (1060 aa).

Residues 1–57 (MDSGAGGRRCPEAALLILGPPRMEHLRHSPGPGGQRLLLPSMLLALLLLLAPSPGHA) form the signal peptide. Cadherin domains are found at residues 58 to 168 (TRVV…TPNF), 169 to 280 (ASPV…APKF), 281 to 387 (ERPS…APTI), 396 to 506 (THQD…APVF), 507 to 612 (TQSV…DPKF), 613 to 715 (MLSG…APYI), and 718 to 844 (PSNT…DPEY). At 58 to 852 (TRVVYKVPEE…EYERSKQRGN (795 aa)) the chain is on the extracellular side. 2 N-linked (GlcNAc...) asparagine glycosylation sites follow: asparagine 305 and asparagine 403. 4 N-linked (GlcNAc...) asparagine glycosylation sites follow: asparagine 618, asparagine 662, asparagine 813, and asparagine 818. The helical transmembrane segment at 853–873 (ILFGVVAGVVAVALLIALAVL) threads the bilayer. Residues 874-1060 (VRYCRQREAK…HGAIWTEVWE (187 aa)) are Cytoplasmic-facing. A compositionally biased stretch (basic and acidic residues) spans 884 to 897 (SGYQAGKKETKDLY). The segment at 884 to 1045 (SGYQAGKKET…QPFQLSTPQP (162 aa)) is disordered. Residues 907-920 (KGNKSKGKKSKSPK) are compositionally biased toward basic residues. Phosphoserine occurs at positions 918, 949, 962, and 984. The span at 973-986 (SPLPSIQLQPQSPS) shows a compositional bias: low complexity. 2 stretches are compositionally biased toward polar residues: residues 1003–1024 (FVGT…SYRT) and 1033–1043 (QVGQPFQLSTP).

In terms of tissue distribution, highly expressed in the brain and neuro-glial cells.

It is found in the cell junction. Its subcellular location is the cell membrane. In terms of biological role, may be involved in cell-cell interaction processes and in cell adhesion. In Homo sapiens (Human), this protein is Protocadherin-1 (PCDH1).